Consider the following 78-residue polypeptide: Small ribosomal subunit protein bS18 (78 aa).

It belongs to the bacterial ribosomal protein bS18 family. Part of the 30S ribosomal subunit. Forms a tight heterodimer with protein bS6.

In terms of biological role, binds as a heterodimer with protein bS6 to the central domain of the 16S rRNA, where it helps stabilize the platform of the 30S subunit. In Acidothermus cellulolyticus (strain ATCC 43068 / DSM 8971 / 11B), this protein is Small ribosomal subunit protein bS18.